A 1331-amino-acid chain; its full sequence is Elongator complex protein 1 (1331 aa).

Residues serine 803, serine 1170, and serine 1173 each carry the phosphoserine modification. Positions 884–1331 (VDVNELFNHS…RSQWKLSLLE (448 aa)) are mediates dimerization. The span at 1167–1176 (ETSSIRSGSE) shows a compositional bias: polar residues. The disordered stretch occupies residues 1167–1207 (ETSSIRSGSEMSGRYSHSNSRISARSSKNRRKAERKKHSLK). The required for binding to tRNA stretch occupies residues 1190 to 1208 (ARSSKNRRKAERKKHSLKE). Positions 1193 to 1205 (SKNRRKAERKKHS) are enriched in basic residues.

It belongs to the ELP1/IKA1 family. In terms of assembly, homodimer; dimerization promotes ELP1 stability and elongator complex formation. Component of the elongator complex which consists of ELP1, ELP2, ELP3, ELP4, ELP5 and ELP6. Interacts preferentially with MAP3K14/NIK followed by IKK-alpha and IKK-beta. Post-translationally, phosphorylated.

Its subcellular location is the cytoplasm. The protein localises to the nucleus. It participates in tRNA modification; 5-methoxycarbonylmethyl-2-thiouridine-tRNA biosynthesis. Its function is as follows. Component of the elongator complex which is required for multiple tRNA modifications, including mcm5U (5-methoxycarbonylmethyl uridine), mcm5s2U (5-methoxycarbonylmethyl-2-thiouridine), and ncm5U (5-carbamoylmethyl uridine). The elongator complex catalyzes formation of carboxymethyluridine in the wobble base at position 34 in tRNAs. Regulates the migration and branching of projection neurons in the developing cerebral cortex, through a process depending on alpha-tubulin acetylation. ELP1 binds to tRNA, mediating interaction of the elongator complex with tRNA. May act as a scaffold protein that assembles active IKK-MAP3K14 complexes (IKKA, IKKB and MAP3K14/NIK). This is Elongator complex protein 1 (Elp1) from Rattus norvegicus (Rat).